Here is a 190-residue protein sequence, read N- to C-terminus: Potassium-transporting ATPase KdpC subunit (190 aa).

A helical transmembrane segment spans residues 10 to 30 (TFLFLLLITGGVYPLLTTALG).

Belongs to the KdpC family. The system is composed of three essential subunits: KdpA, KdpB and KdpC.

Its subcellular location is the cell inner membrane. Functionally, part of the high-affinity ATP-driven potassium transport (or Kdp) system, which catalyzes the hydrolysis of ATP coupled with the electrogenic transport of potassium into the cytoplasm. This subunit acts as a catalytic chaperone that increases the ATP-binding affinity of the ATP-hydrolyzing subunit KdpB by the formation of a transient KdpB/KdpC/ATP ternary complex. The chain is Potassium-transporting ATPase KdpC subunit from Escherichia coli O7:K1 (strain IAI39 / ExPEC).